Here is a 74-residue protein sequence, read N- to C-terminus: UPF0346 protein BPUM_1890 (74 aa).

This sequence belongs to the UPF0346 family.

This Bacillus pumilus (strain SAFR-032) protein is UPF0346 protein BPUM_1890.